The primary structure comprises 371 residues: DNA replication and repair protein RecF (371 aa).

Residue 30–37 (GENAQGKT) participates in ATP binding.

It belongs to the RecF family.

It localises to the cytoplasm. Its function is as follows. The RecF protein is involved in DNA metabolism; it is required for DNA replication and normal SOS inducibility. RecF binds preferentially to single-stranded, linear DNA. It also seems to bind ATP. In Staphylococcus epidermidis (strain ATCC 35984 / DSM 28319 / BCRC 17069 / CCUG 31568 / BM 3577 / RP62A), this protein is DNA replication and repair protein RecF.